Reading from the N-terminus, the 908-residue chain is DNA (cytosine-5)-methyltransferase 3A (908 aa).

Low complexity predominate over residues Met1–Ser13. Disordered stretches follow at residues Met1–Arg183 and Asn226–Glu281. Basic and acidic residues predominate over residues Leu14–Glu37. Positions Lys44–His54 are enriched in basic residues. Polar residues predominate over residues Thr69 to Gly80. Ser102 is modified (phosphoserine). Residues Gly110 to Ala124 show a composition bias toward low complexity. Thr120 is subject to Phosphothreonine. Residue Lys158 forms a Glycyl lysine isopeptide (Lys-Gly) (interchain with G-Cter in SUMO2) linkage. Arg167 is subject to Omega-N-methylarginine. The tract at residues Ser195–Asn399 is interaction with DNMT1 and DNMT3B. Phosphoserine occurs at positions 239 and 251. Positions Ala242 to Thr256 are enriched in polar residues. Thr257 is subject to Phosphothreonine. Basic and acidic residues predominate over residues Ala265–Asp275. The 59-residue stretch at Ile288–Phe346 folds into the PWWP domain. Ser386 and Ser389 each carry phosphoserine. Residues Ala443–Lys462 form a disordered region. In terms of domain architecture, ADD spans Glu478–Asp610. The GATA-type; atypical zinc finger occupies Ile489 to Glu519. Positions Cys490 to Cys582 are interaction with the PRC2/EED-EZH2 complex. The PHD-type; atypical zinc-finger motif lies at Gln530 to Gly586. One can recognise an SAM-dependent MTase C5-type domain in the interval Ile630–Val908. S-adenosyl-L-methionine contacts are provided by residues Asp637 to Thr641, Glu660, and Asp682 to Arg684. Residue Cys706 is part of the active site. Position 706 is an S-methylcysteine; by autocatalysis (Cys706). Residue Arg887–Trp889 coordinates S-adenosyl-L-methionine.

It belongs to the class I-like SAM-binding methyltransferase superfamily. C5-methyltransferase family. Heterotetramer composed of 1 DNMT3A homodimer and 2 DNMT3L subunits (DNMT3L-DNMT3A-DNMT3A-DNMT3L). Interacts with DNMT1 and DNMT3B. Interacts with MPHOSPH8. Interacts with histone H3 that is not methylated at 'Lys-4' (H3K4). Binds the ZBTB18 transcriptional repressor. Interacts with SETDB1. Associates with HDAC1 through its ADD domain. Interacts with UHRF1. Interacts with the PRC2/EED-EZH2 complex. Interacts with UBC9, PIAS1 and PIAS2. Interacts with SPOCD1. Interacts with ZNF263; recruited to the SIX3 promoter along with other proteins involved in chromatin modification and transcriptional corepression where it contributes to transcriptional repression. Auto-methylated at Cys-706: auto-methylation takes place in absence of DNA substrate and inactivates the DNA methyltransferase activity. Inactivation by auto-methylation may be used to inactivate unused DNA methyltransferases in the cell. Post-translationally, sumoylated; sumoylation disrupts the ability to interact with histone deacetylases (HDAC1 and HDAC2) and repress transcription. Isoform 1 is expressed ubiquitously at low levels. Expression of isoform 2 is restricted to tissues containing cells which are undergoing active de novo methylation, including spleen, testis and thymus.

Its subcellular location is the nucleus. The protein resides in the chromosome. It is found in the cytoplasm. It catalyses the reaction a 2'-deoxycytidine in DNA + S-adenosyl-L-methionine = a 5-methyl-2'-deoxycytidine in DNA + S-adenosyl-L-homocysteine + H(+). The enzyme catalyses L-cysteinyl-[protein] + S-adenosyl-L-methionine = S-methyl-L-cysteinyl-[protein] + S-adenosyl-L-homocysteine + H(+). Activated by binding to the regulatory factor DNMT3L. Auto-methylation at Cys-706 in absence of DNA inactivates the DNA methyltransferase activity. Its function is as follows. Required for genome-wide de novo methylation and is essential for the establishment of DNA methylation patterns during development. DNA methylation is coordinated with methylation of histones. It modifies DNA in a non-processive manner and also methylates non-CpG sites. May preferentially methylate DNA linker between 2 nucleosomal cores and is inhibited by histone H1. Plays a role in paternal and maternal imprinting. Required for methylation of most imprinted loci in germ cells. Acts as a transcriptional corepressor for ZBTB18. Recruited to trimethylated 'Lys-36' of histone H3 (H3K36me3) sites. Can actively repress transcription through the recruitment of HDAC activity. Also has weak auto-methylation activity on Cys-706 in absence of DNA. The polypeptide is DNA (cytosine-5)-methyltransferase 3A (Mus musculus (Mouse)).